The chain runs to 156 residues: ATP synthase subunit b (156 aa).

Residues 11 to 31 (AIAFVLFVLFCMKYVWPPLMA) traverse the membrane as a helical segment.

The protein belongs to the ATPase B chain family. As to quaternary structure, F-type ATPases have 2 components, F(1) - the catalytic core - and F(0) - the membrane proton channel. F(1) has five subunits: alpha(3), beta(3), gamma(1), delta(1), epsilon(1). F(0) has three main subunits: a(1), b(2) and c(10-14). The alpha and beta chains form an alternating ring which encloses part of the gamma chain. F(1) is attached to F(0) by a central stalk formed by the gamma and epsilon chains, while a peripheral stalk is formed by the delta and b chains.

The protein resides in the cell inner membrane. Its function is as follows. F(1)F(0) ATP synthase produces ATP from ADP in the presence of a proton or sodium gradient. F-type ATPases consist of two structural domains, F(1) containing the extramembraneous catalytic core and F(0) containing the membrane proton channel, linked together by a central stalk and a peripheral stalk. During catalysis, ATP synthesis in the catalytic domain of F(1) is coupled via a rotary mechanism of the central stalk subunits to proton translocation. In terms of biological role, component of the F(0) channel, it forms part of the peripheral stalk, linking F(1) to F(0). In Sodalis glossinidius (strain morsitans), this protein is ATP synthase subunit b.